Here is a 461-residue protein sequence, read N- to C-terminus: tRNA modification GTPase MnmE (461 aa).

3 residues coordinate (6S)-5-formyl-5,6,7,8-tetrahydrofolate: R27, E89, and R128. The TrmE-type G domain occupies 224–382 (GLKTAIVGRP…LEALIKKLFF (159 aa)). N234 lines the K(+) pocket. Residues 234 to 239 (NVGKSS), 253 to 259 (TDVAGTT), and 278 to 281 (DTAG) contribute to the GTP site. A Mg(2+)-binding site is contributed by S238. Residues T253, V255, and T258 each contribute to the K(+) site. T259 contacts Mg(2+). (6S)-5-formyl-5,6,7,8-tetrahydrofolate is bound at residue K461.

This sequence belongs to the TRAFAC class TrmE-Era-EngA-EngB-Septin-like GTPase superfamily. TrmE GTPase family. As to quaternary structure, homodimer. Heterotetramer of two MnmE and two MnmG subunits. K(+) is required as a cofactor.

Its subcellular location is the cytoplasm. In terms of biological role, exhibits a very high intrinsic GTPase hydrolysis rate. Involved in the addition of a carboxymethylaminomethyl (cmnm) group at the wobble position (U34) of certain tRNAs, forming tRNA-cmnm(5)s(2)U34. This is tRNA modification GTPase MnmE from Lactobacillus delbrueckii subsp. bulgaricus (strain ATCC BAA-365 / Lb-18).